The primary structure comprises 815 residues: Bifunctional aspartokinase/homoserine dehydrogenase (815 aa).

Positions 1-249 (MRVLKFGGTS…VPDARLLPTL (249 aa)) are aspartokinase. The segment at 250 to 470 (SYREAMELSY…NNKKVVDMFL (221 aa)) is interface. ACT domains follow at residues 320–392 (VSGP…PIEV) and 401–478 (VVGD…GVGG). Positions 471–815 (VGVGGVGGEL…FADILRTLQH (345 aa)) are homoserine dehydrogenase. NAD(+) is bound by residues V473, G475, V476, A504, and T555. V476 is an NADP(+) binding site. An NADPH-binding site is contributed by V476. T555 contributes to the NADP(+) binding site. NADPH contacts are provided by T555, S556, and K579. K579 lines the NADP(+) pocket. The Na(+) site is built by E606, V609, A611, and L613. NADP(+) is bound by residues G664 and E667. 2 residues coordinate L-homoserine: E667 and D678. Catalysis depends on K682, which acts as the Proton donor. NAD(+) is bound at residue G797. G797 is an NADP(+) binding site. G797 contacts NADPH.

It in the N-terminal section; belongs to the aspartokinase family. This sequence in the C-terminal section; belongs to the homoserine dehydrogenase family. As to quaternary structure, homotetramer. The cofactor is a metal cation.

It carries out the reaction L-homoserine + NADP(+) = L-aspartate 4-semialdehyde + NADPH + H(+). The catalysed reaction is L-homoserine + NAD(+) = L-aspartate 4-semialdehyde + NADH + H(+). It catalyses the reaction L-aspartate + ATP = 4-phospho-L-aspartate + ADP. Its pathway is amino-acid biosynthesis; L-lysine biosynthesis via DAP pathway; (S)-tetrahydrodipicolinate from L-aspartate: step 1/4. It participates in amino-acid biosynthesis; L-methionine biosynthesis via de novo pathway; L-homoserine from L-aspartate: step 1/3. The protein operates within amino-acid biosynthesis; L-methionine biosynthesis via de novo pathway; L-homoserine from L-aspartate: step 3/3. It functions in the pathway amino-acid biosynthesis; L-threonine biosynthesis; L-threonine from L-aspartate: step 1/5. Its pathway is amino-acid biosynthesis; L-threonine biosynthesis; L-threonine from L-aspartate: step 3/5. In terms of biological role, bifunctional aspartate kinase and homoserine dehydrogenase that catalyzes the first and the third steps toward the synthesis of lysine, methionine and threonine from aspartate. The protein is Bifunctional aspartokinase/homoserine dehydrogenase (thrA) of Haemophilus influenzae (strain ATCC 51907 / DSM 11121 / KW20 / Rd).